Consider the following 398-residue polypeptide: Acetate kinase (398 aa).

Asparagine 7 lines the Mg(2+) pocket. Residue lysine 14 coordinates ATP. Arginine 91 provides a ligand contact to substrate. The active-site Proton donor/acceptor is the aspartate 148. Residues 208-212 (HIGNG), 283-285 (DMR), and 331-335 (GVGEN) contribute to the ATP site. Glutamate 385 provides a ligand contact to Mg(2+).

This sequence belongs to the acetokinase family. As to quaternary structure, homodimer. The cofactor is Mg(2+). Mn(2+) serves as cofactor.

It localises to the cytoplasm. The catalysed reaction is acetate + ATP = acetyl phosphate + ADP. The protein operates within metabolic intermediate biosynthesis; acetyl-CoA biosynthesis; acetyl-CoA from acetate: step 1/2. Functionally, catalyzes the formation of acetyl phosphate from acetate and ATP. Can also catalyze the reverse reaction. This chain is Acetate kinase, found in Porphyromonas gingivalis (strain ATCC BAA-308 / W83).